The following is a 323-amino-acid chain: MSSLPPAIFLMGPTASGKTDLALELARVLPCELISVDSALVYRGMDIGTAKPSADVLAQFPHRLVDILDPAESYSAAEFSSDALAAMAEITAAGRIPLLVGGTMLYFKALQEGLADMPAADASVRAELEALAASEGLQVLHDRLAQVDPESAARIHPNDPQRLVRALEVYCVSGLTMSEHRARQRSQKAGPDAPGSGVLPYTVAQLCIAPAQRHILHERIERRFRHMVEQGFVEEVEALRSRGDLHLGMPSIRAVGYRQVWEYLDGSSTREEMVERGIIATRQLAKRQFTWLRSWGEVHWLDSLSCDNLPRALKYLQSLSILS.

12–19 (GPTASGKT) is a binding site for ATP. 14-19 (TASGKT) contributes to the substrate binding site. 2 interaction with substrate tRNA regions span residues 37 to 40 (DSAL) and 161 to 165 (QRLVR).

It belongs to the IPP transferase family. Monomer. Mg(2+) serves as cofactor.

The enzyme catalyses adenosine(37) in tRNA + dimethylallyl diphosphate = N(6)-dimethylallyladenosine(37) in tRNA + diphosphate. Catalyzes the transfer of a dimethylallyl group onto the adenine at position 37 in tRNAs that read codons beginning with uridine, leading to the formation of N6-(dimethylallyl)adenosine (i(6)A). The protein is tRNA dimethylallyltransferase of Stutzerimonas stutzeri (strain A1501) (Pseudomonas stutzeri).